Consider the following 125-residue polypeptide: Small ribosomal subunit protein bS6 (125 aa).

Positions 97-125 (TEASPMKAAKEERKPLAEVENNDFEDAEE) are disordered. A compositionally biased stretch (basic and acidic residues) spans 104-113 (AAKEERKPLA). The segment covering 116–125 (ENNDFEDAEE) has biased composition (acidic residues).

Belongs to the bacterial ribosomal protein bS6 family.

Binds together with bS18 to 16S ribosomal RNA. The polypeptide is Small ribosomal subunit protein bS6 (Haemophilus influenzae (strain PittEE)).